Consider the following 123-residue polypeptide: Small ribosomal subunit protein uS12 (123 aa).

Residues 1–21 (MPTIEQLVRKGRQAKPKKSKT) form a disordered region. Positions 9–20 (RKGRQAKPKKSK) are enriched in basic residues.

Belongs to the universal ribosomal protein uS12 family. As to quaternary structure, part of the 30S ribosomal subunit. Contacts proteins S8 and S17. May interact with IF1 in the 30S initiation complex.

Its function is as follows. With S4 and S5 plays an important role in translational accuracy. Functionally, interacts with and stabilizes bases of the 16S rRNA that are involved in tRNA selection in the A site and with the mRNA backbone. Located at the interface of the 30S and 50S subunits, it traverses the body of the 30S subunit contacting proteins on the other side and probably holding the rRNA structure together. The combined cluster of proteins S8, S12 and S17 appears to hold together the shoulder and platform of the 30S subunit. In Bifidobacterium longum (strain NCC 2705), this protein is Small ribosomal subunit protein uS12.